We begin with the raw amino-acid sequence, 128 residues long: Large ribosomal subunit protein bL12 (128 aa).

It belongs to the bacterial ribosomal protein bL12 family. Homodimer. Part of the ribosomal stalk of the 50S ribosomal subunit. Forms a multimeric L10(L12)X complex, where L10 forms an elongated spine to which 2 to 4 L12 dimers bind in a sequential fashion. Binds GTP-bound translation factors.

Its function is as follows. Forms part of the ribosomal stalk which helps the ribosome interact with GTP-bound translation factors. Is thus essential for accurate translation. The protein is Large ribosomal subunit protein bL12 of Saccharopolyspora erythraea (strain ATCC 11635 / DSM 40517 / JCM 4748 / NBRC 13426 / NCIMB 8594 / NRRL 2338).